The sequence spans 1585 residues: uncharacterized protein (1585 aa).

The stretch at Asp12–Thr59 forms a coiled coil. Disordered stretches follow at residues Pro586–Arg627 and Ile645–Arg692. The segment covering Thr618–Arg627 has biased composition (polar residues). Residues Ile645–Gly655 show a composition bias toward basic residues. Polar residues predominate over residues Asn661–Val672. Phosphoserine occurs at positions 970 and 972.

To B.subtilis XkdO.

This is an uncharacterized protein from Bacillus subtilis (strain 168).